The following is a 145-amino-acid chain: Ribosome maturation factor RimP (145 aa).

It belongs to the RimP family.

It localises to the cytoplasm. Functionally, required for maturation of 30S ribosomal subunits. The sequence is that of Ribosome maturation factor RimP from Borrelia garinii subsp. bavariensis (strain ATCC BAA-2496 / DSM 23469 / PBi) (Borreliella bavariensis).